Reading from the N-terminus, the 473-residue chain is Siroheme synthase (473 aa).

The precorrin-2 dehydrogenase /sirohydrochlorin ferrochelatase stretch occupies residues 1–203 (MQYLPIFTKL…GDTQAAEQQL (203 aa)). NAD(+) is bound by residues 22–23 (DV) and 43–44 (PK). S128 bears the Phosphoserine mark. The segment at 215–473 (GEVYVVGAGP…SFAQPLTDVA (259 aa)) is uroporphyrinogen-III C-methyltransferase. P224 lines the S-adenosyl-L-methionine pocket. D247 functions as the Proton acceptor in the catalytic mechanism. Catalysis depends on K269, which acts as the Proton donor. S-adenosyl-L-methionine-binding positions include 300-302 (GGD), I305, 330-331 (TA), M382, and G411.

The protein in the N-terminal section; belongs to the precorrin-2 dehydrogenase / sirohydrochlorin ferrochelatase family. It in the C-terminal section; belongs to the precorrin methyltransferase family.

The enzyme catalyses uroporphyrinogen III + 2 S-adenosyl-L-methionine = precorrin-2 + 2 S-adenosyl-L-homocysteine + H(+). It catalyses the reaction precorrin-2 + NAD(+) = sirohydrochlorin + NADH + 2 H(+). The catalysed reaction is siroheme + 2 H(+) = sirohydrochlorin + Fe(2+). It participates in cofactor biosynthesis; adenosylcobalamin biosynthesis; precorrin-2 from uroporphyrinogen III: step 1/1. Its pathway is cofactor biosynthesis; adenosylcobalamin biosynthesis; sirohydrochlorin from precorrin-2: step 1/1. It functions in the pathway porphyrin-containing compound metabolism; siroheme biosynthesis; precorrin-2 from uroporphyrinogen III: step 1/1. The protein operates within porphyrin-containing compound metabolism; siroheme biosynthesis; siroheme from sirohydrochlorin: step 1/1. It participates in porphyrin-containing compound metabolism; siroheme biosynthesis; sirohydrochlorin from precorrin-2: step 1/1. Multifunctional enzyme that catalyzes the SAM-dependent methylations of uroporphyrinogen III at position C-2 and C-7 to form precorrin-2 via precorrin-1. Then it catalyzes the NAD-dependent ring dehydrogenation of precorrin-2 to yield sirohydrochlorin. Finally, it catalyzes the ferrochelation of sirohydrochlorin to yield siroheme. In Pseudoalteromonas translucida (strain TAC 125), this protein is Siroheme synthase.